The sequence spans 188 residues: RWD domain-containing protein 4 (188 aa).

The RWD domain maps to 9 to 111 (MELEALRSIY…EYAKDNKEQF (103 aa)). The interval 132–167 (TPSAAPSSKKKDKKEQLSKAQKRKLADKTDHKGELP) is disordered. Basic and acidic residues predominate over residues 155 to 166 (KLADKTDHKGEL).

This chain is RWD domain-containing protein 4 (Rwdd4), found in Rattus norvegicus (Rat).